A 489-amino-acid polypeptide reads, in one-letter code: WD repeat-containing protein JIP5 (489 aa).

A WD 1 repeat occupies 4 to 45 (PLSSDALDLCFHPAAETNLLAVGLISGKIQLINYDDYLSSPS). The disordered stretch occupies residues 46 to 66 (SSRTPLAPPSKKSKPSTISSA). Residues 124 to 163 (EVHDAAPSRVLPVDESLVVTGDDDGVVRLWDVRKGGGKGI) form a WD 2 repeat. The tract at residues 192-246 (SIKEAKKSKTQLKKQRRRARQAERLKEHDKEKREQNASDTEASEPDSEDDAAIKV) is disordered. A compositionally biased stretch (basic residues) spans 199–210 (SKTQLKKQRRRA). Over residues 211–227 (RQAERLKEHDKEKREQN) the composition is skewed to basic and acidic residues. Residues 232 to 241 (EASEPDSEDD) are compositionally biased toward acidic residues. WD repeat units follow at residues 279-318 (DQEDELLSITSIRSSTKLVVGTQLGILSLWTPSRGLLDHV) and 323-363 (GHPA…GVIA). Residues 417-489 (IVGLAEDDSD…AGKGGFFSDL (73 aa)) are disordered. 2 stretches are compositionally biased toward acidic residues: residues 421–440 (AEDDSDDDDDDDDDDDDDDD) and 449–472 (DGAEQTDGDAESGQDDEQDPDSED).

This sequence belongs to the WD repeat WDR55 family.

The protein resides in the nucleus. It is found in the nucleolus. In Mycosarcoma maydis (Corn smut fungus), this protein is WD repeat-containing protein JIP5 (JIP5).